The primary structure comprises 63 residues: Large ribosomal subunit protein bL35 (63 aa).

The protein belongs to the bacterial ribosomal protein bL35 family.

This is Large ribosomal subunit protein bL35 from Campylobacter hominis (strain ATCC BAA-381 / DSM 21671 / CCUG 45161 / LMG 19568 / NCTC 13146 / CH001A).